Consider the following 136-residue polypeptide: Histone H3 (136 aa).

The segment at 1 to 43 (MARTKQTARKSTGGKAPRKQLATKAARKSAPATGGVKKPHRYR) is disordered. At Lys5 the chain carries N6-methylated lysine. Position 10 is an N6-acetyllysine; alternate (Lys10). Position 10 is an N6-methylated lysine; alternate (Lys10). A Phosphoserine modification is found at Ser11. An N6-acetyllysine mark is found at Lys15 and Lys24. An N6-methylated lysine mark is found at Lys28, Lys37, and Lys80.

It belongs to the histone H3 family. As to quaternary structure, the nucleosome is a histone octamer containing two molecules each of H2A, H2B, H3 and H4 assembled in one H3-H4 heterotetramer and two H2A-H2B heterodimers. The octamer wraps approximately 147 bp of DNA. Post-translationally, acetylation is generally linked to gene activation. In terms of processing, methylation at Lys-5 is linked to gene activation. Methylation at Lys-10 is linked to gene repression.

It localises to the nucleus. The protein localises to the chromosome. Core component of nucleosome. Nucleosomes wrap and compact DNA into chromatin, limiting DNA accessibility to the cellular machineries which require DNA as a template. Histones thereby play a central role in transcription regulation, DNA repair, DNA replication and chromosomal stability. DNA accessibility is regulated via a complex set of post-translational modifications of histones, also called histone code, and nucleosome remodeling. The chain is Histone H3 from Platynereis dumerilii (Dumeril's clam worm).